Here is a 337-residue protein sequence, read N- to C-terminus: Follistatin (337 aa).

The signal sequence occupies residues 1–22 (PGGVCLLLLLLCQFMEDRSAQA). Positions 23 to 96 (GNCWLRQAKN…TCENVDCGPG (74 aa)) constitute a TB domain. 18 disulfide bridges follow: C25-C48, C35-C81, C49-C84, C88-C99, C93-C109, C111-C143, C115-C136, C125-C157, C161-C172, C166-C182, C185-C218, C189-C211, C200-C232, C238-C249, C243-C260, C263-C295, C267-C288, and C277-C309. In terms of domain architecture, Follistatin-like 1 spans 87–110 (TCENVDCGPGKKCRMNKKNKPRCV). The Kazal-like 1 domain maps to 105–159 (NKPRCVCAPDCSNITWKGPVCGLDGKTYRNECALLKARCKEQPELEVQYQGKCKK). The N-linked (GlcNAc...) asparagine glycan is linked to N117. Residues 160 to 183 (TCRDVFCPGSSTCVVDQTNNAYCV) enclose the Follistatin-like 2 domain. The Kazal-like 2 domain maps to 179-234 (NAYCVTCNRICPEPTSSEQYLCGNDGVTYPSACHLRKATCLLGRSIGLAYEGKCIK). The Follistatin-like 3 domain maps to 237-261 (SCEDIQCTGGKKCLWDFKVGRGRCS). A Kazal-like 3 domain is found at 254-311 (KVGRGRCSLCGELCPESKSEEPVCASDNATYASECAMKEAACSSGVLLEVKHSGSCNS). Residue N281 is glycosylated (N-linked (GlcNAc...) asparagine). The disordered stretch occupies residues 309–337 (CNSISEDTEDEEEDEDQDYSFPISSILEW). The span at 314–326 (EDTEDEEEDEDQD) shows a compositional bias: acidic residues.

In terms of assembly, monomer.

The protein resides in the secreted. Functionally, binds directly to activin and functions as an activin antagonist. Specific inhibitor of the biosynthesis and secretion of pituitary follicle stimulating hormone (FSH). This Ovis aries (Sheep) protein is Follistatin.